The sequence spans 620 residues: Probable potassium transport system protein Kup 2 (620 aa).

The next 12 membrane-spanning stretches (helical) occupy residues 10 to 30 (LLVS…LYAL), 50 to 70 (VLSL…VIVI), 102 to 122 (MMLG…TPAI), 136 to 156 (PDLR…LFAI), 168 to 188 (FGPV…VNVI), 211 to 231 (LMSF…EALY), 246 to 266 (WFCL…ALLI), 284 to 304 (MVVP…QAVI), 336 to 356 (IYVP…VVGF), 368 to 388 (IAVT…MALL), 393 to 413 (MALV…FFSA), and 415 to 435 (IIKV…SFTV).

Belongs to the HAK/KUP transporter (TC 2.A.72) family.

The protein resides in the cell inner membrane. The catalysed reaction is K(+)(in) + H(+)(in) = K(+)(out) + H(+)(out). In terms of biological role, transport of potassium into the cell. Likely operates as a K(+):H(+) symporter. The protein is Probable potassium transport system protein Kup 2 of Rhodopseudomonas palustris (strain BisB5).